The sequence spans 623 residues: F-box protein FBX14 (623 aa).

Residues 18–48 (LNLNPPCSSSSSSSSAATFTNKSRNFKSSPP) are disordered. Over residues 33–45 (AATFTNKSRNFKS) the composition is skewed to polar residues. Positions 54-97 (VLENVLENVLQFLTSRCDRNAVSLVCRSWYRVEAQTRLEVFIGN) constitute an F-box domain. Lys119 is a 1D-myo-inositol hexakisphosphate binding site. The interval 126 to 127 (DF) is interaction with auxin-responsive proteins. 1D-myo-inositol hexakisphosphate-binding positions include 158-159 (KR) and Arg391. Residues 394–399 (PFDPRE) are interaction with auxin-responsive proteins. A 1D-myo-inositol hexakisphosphate-binding site is contributed by 447–449 (VFR). Positions 451 to 455 (CIMGR) are interaction with auxin-responsive proteins. Arg482 serves as a coordination point for 1D-myo-inositol hexakisphosphate. The tract at residues 510–511 (AF) is interaction with auxin-responsive proteins. 1D-myo-inositol hexakisphosphate contacts are provided by residues 530–531 (QK) and Arg555.

As to quaternary structure, part of a SCF (SKP1-cullin-F-box) protein ligase complex. May interact with auxin and auxin-responsive proteins.

Its subcellular location is the nucleus. Its pathway is protein modification; protein ubiquitination. The sequence is that of F-box protein FBX14 (FBX14) from Arabidopsis thaliana (Mouse-ear cress).